The following is a 338-amino-acid chain: Ketol-acid reductoisomerase (NADP(+)) (338 aa).

The KARI N-terminal Rossmann domain occupies 1 to 181 (MNVFYDKDAD…GGGRAGIIET (181 aa)). Residues 24–27 (YGSQ), R47, and S52 each bind NADP(+). H107 is an active-site residue. G133 is a binding site for NADP(+). Residues 182–327 (NFREETETDL…AKLRAMMPWI (146 aa)) form the KARI C-terminal knotted domain. Positions 190, 194, 226, and 230 each coordinate Mg(2+). S251 contacts substrate.

This sequence belongs to the ketol-acid reductoisomerase family. Requires Mg(2+) as cofactor.

It carries out the reaction (2R)-2,3-dihydroxy-3-methylbutanoate + NADP(+) = (2S)-2-acetolactate + NADPH + H(+). The enzyme catalyses (2R,3R)-2,3-dihydroxy-3-methylpentanoate + NADP(+) = (S)-2-ethyl-2-hydroxy-3-oxobutanoate + NADPH + H(+). It participates in amino-acid biosynthesis; L-isoleucine biosynthesis; L-isoleucine from 2-oxobutanoate: step 2/4. Its pathway is amino-acid biosynthesis; L-valine biosynthesis; L-valine from pyruvate: step 2/4. Functionally, involved in the biosynthesis of branched-chain amino acids (BCAA). Catalyzes an alkyl-migration followed by a ketol-acid reduction of (S)-2-acetolactate (S2AL) to yield (R)-2,3-dihydroxy-isovalerate. In the isomerase reaction, S2AL is rearranged via a Mg-dependent methyl migration to produce 3-hydroxy-3-methyl-2-ketobutyrate (HMKB). In the reductase reaction, this 2-ketoacid undergoes a metal-dependent reduction by NADPH to yield (R)-2,3-dihydroxy-isovalerate. The protein is Ketol-acid reductoisomerase (NADP(+)) of Burkholderia cenocepacia (strain ATCC BAA-245 / DSM 16553 / LMG 16656 / NCTC 13227 / J2315 / CF5610) (Burkholderia cepacia (strain J2315)).